Consider the following 156-residue polypeptide: Small ribosomal subunit protein uS7 (156 aa).

This sequence belongs to the universal ribosomal protein uS7 family. As to quaternary structure, part of the 30S ribosomal subunit. Contacts proteins S9 and S11.

Its function is as follows. One of the primary rRNA binding proteins, it binds directly to 16S rRNA where it nucleates assembly of the head domain of the 30S subunit. Is located at the subunit interface close to the decoding center, probably blocks exit of the E-site tRNA. This Trichlorobacter lovleyi (strain ATCC BAA-1151 / DSM 17278 / SZ) (Geobacter lovleyi) protein is Small ribosomal subunit protein uS7.